Consider the following 434-residue polypeptide: Chaperone SurA (434 aa).

The N-terminal stretch at 1-22 (MKPSKHLIFALFALAISQPTMA) is a signal peptide. PpiC domains lie at 173-274 (DVEY…KIMD) and 283-383 (IEEV…QLEE).

The protein resides in the periplasm. The catalysed reaction is [protein]-peptidylproline (omega=180) = [protein]-peptidylproline (omega=0). Chaperone involved in the correct folding and assembly of outer membrane proteins. Recognizes specific patterns of aromatic residues and the orientation of their side chains, which are found more frequently in integral outer membrane proteins. May act in both early periplasmic and late outer membrane-associated steps of protein maturation. This is Chaperone SurA from Shewanella sp. (strain MR-7).